The primary structure comprises 667 residues: Receptor for retinol uptake STRA6 (667 aa).

Over residues 1–13 (MSSQPAGNQTSPG) the composition is skewed to polar residues. The disordered stretch occupies residues 1–22 (MSSQPAGNQTSPGPTEDYSYGS). At 1–50 (MSSQPAGNQTSPGPTEDYSYGSWYIDEPQGGEELQPEGEVPSCHTSIPPS) the chain is on the extracellular side. A glycan (N-linked (GlcNAc...) asparagine) is linked at Asn-8. A helical transmembrane segment spans residues 51 to 71 (LYHACLASLSILVLLLLAMLV). The Cytoplasmic portion of the chain corresponds to 72–98 (RRRQLWPDCVRGRPGLPSPVDFLAGDR). Residues 99–119 (PQAVPAAVFVVLFSSLCLLLP) traverse the membrane as a helical segment. Residues 120–144 (DEDPLPFLTLASAPSQDGKTEAPRG) lie on the Extracellular side of the membrane. The chain crosses the membrane as a helical span at residues 145–165 (AWKILGLFYYAALCYPLAACA). The Cytoplasmic portion of the chain corresponds to 166–168 (TAG). Residues 169-189 (HTAAHLLGSTLSWAHLGVQVW) traverse the membrane as a helical segment. Over 190–205 (QRAECPQVPKIYKYYS) the chain is Extracellular. Residues 206–226 (LLASLPLLLGLGFLSLWYPVQ) traverse the membrane as a helical segment. Over 227–295 (LVRSFSCRTG…PQPGFRLPLK (69 aa)) the chain is Cytoplasmic. Residues 235–293 (TGAGSKGLQSSYSEEYLRNLLCRKKLGSSSHTSKHGFLSWAWVCLRHCIYTPQPGFRLP) are interaction with RBP1. Residues 296–316 (LVLSATLTGTAIYQVALLLLV) traverse the membrane as a helical segment. The Extracellular segment spans residues 317–367 (GMVPNIQKVRAGVTTDVSYLLAGFGIVLSEDKQEVVELVKHHLWALEVCYI). The helical transmembrane segment at 368 to 388 (SALVLSCSLTFLVLMRSLVTH) threads the bilayer. The Cytoplasmic portion of the chain corresponds to 389-422 (RTNLRALHRGAALDSSPLHRSPHPSRRAIFCWMS). A helical transmembrane segment spans residues 423–443 (FSAYQTAFICLGLLVQQIIFF). At 444–473 (LGTTALAFLVLMPVLHGRNLLLFRSLESSW) the chain is on the extracellular side. Residues 474-494 (PFWLTLALAVILQSMAAHWVF) traverse the membrane as a helical segment. The Cytoplasmic segment spans residues 495–509 (LETHDGHPQLTNRRV). An intramembrane region (helical) is located at residues 510 to 547 (LYAATFLLFPLNVLVGAMVATWRVLLSALYNAIHLGQM). Residues 548 to 667 (DLSLLPPRAA…ALLGANGAQP (120 aa)) are Cytoplasmic-facing. Residue Tyr-643 is modified to Phosphotyrosine.

As to quaternary structure, homodimer. Interacts with JAK2 and STAT5. Interacts (via extracellular domains) with RBP4. Interacts (via cytoplasmic domains) with RBP1. In terms of processing, phosphorylated on tyrosine residues in response to RBP4 binding. Phosphorylation requires the presence of LRAT, suggesting it may be triggered by the uptake of retinol that is then metabolized within the cell to retinoids that function as signaling molecules.

The protein resides in the cell membrane. In terms of biological role, functions as a retinol transporter. Accepts all-trans retinol from the extracellular retinol-binding protein RBP4, facilitates retinol transport across the cell membrane, and then transfers retinol to the cytoplasmic retinol-binding protein RBP1. Retinol uptake is enhanced by LRAT, an enzyme that converts retinol to all-trans retinyl esters, the storage forms of vitamin A. Contributes to the activation of a signaling cascade that depends on retinol transport and LRAT-dependent generation of retinol metabolites that then trigger activation of JAK2 and its target STAT5, and ultimately increase the expression of SOCS3 and inhibit cellular responses to insulin. Important for the homeostasis of vitamin A and its derivatives, such as retinoic acid. STRA6-mediated transport is particularly important in the eye, and under conditions of dietary vitamin A deficiency. Does not transport retinoic acid. The chain is Receptor for retinol uptake STRA6 (STRA6) from Pongo abelii (Sumatran orangutan).